Reading from the N-terminus, the 282-residue chain is Elongation factor Ts (282 aa).

The interval 79 to 82 (TDFV) is involved in Mg(2+) ion dislocation from EF-Tu.

Belongs to the EF-Ts family.

The protein resides in the cytoplasm. Associates with the EF-Tu.GDP complex and induces the exchange of GDP to GTP. It remains bound to the aminoacyl-tRNA.EF-Tu.GTP complex up to the GTP hydrolysis stage on the ribosome. The polypeptide is Elongation factor Ts (Colwellia psychrerythraea (strain 34H / ATCC BAA-681) (Vibrio psychroerythus)).